The primary structure comprises 3133 residues: Hemocytin (3133 aa).

A TIL 1 domain is found at 40 to 96 (CTGGQQYTVCADSCLRKCSDTALAASGQCKPVCVEGCACSPSQLLDDNGVCVPVAKC). A glycan (N-linked (GlcNAc...) asparagine) is linked at Asn151. One can recognise a TIL 2 domain in the interval 153 to 209 (TAQNMEFTTCETSEPLTCKNMHLPPSTQTAECRPGCQCKKGQVLDTASKRCVPATQC). The N-linked (GlcNAc...) asparagine glycan is linked to Asn237. The VWFD 1 domain occupies 247–418 (GVCGAWGDSH…DSWKLKPTCP (172 aa)). 3 cysteine pairs are disulfide-bonded: Cys249–Cys380, Cys271–Cys417, and Cys295–Cys302. The TIL 3 domain maps to 509 to 576 (CDEVCSNYDS…TTECVPRAKC (68 aa)). Asn564 carries an N-linked (GlcNAc...) asparagine glycan. Residues 661 to 680 (PDGQSVESEPLPKPNELQIG) form a disordered region. Positions 770-837 (CPPGEVYQAC…ERTCVPVKDC (68 aa)) constitute a TIL 4 domain. Residues 899-924 (STTTTTTTSTTTTTTTPEPTETTTET) are disordered. Cystine bridges form between Cys940–Cys1095 and Cys1116–Cys1254. F5/8 type C domains follow at residues 940–1095 (CSPD…IIGC) and 1116–1254 (CTEP…PIGC). Asn1170, Asn1387, Asn1622, Asn1727, and Asn1847 each carry an N-linked (GlcNAc...) asparagine glycan. The VWFD 2 domain occupies 1619 to 1794 (VFCNMTGRTF…KPGVPADACA (176 aa)). 2 disulfide bridges follow: Cys1621/Cys1754 and Cys1641/Cys1793. Residues 1890-1948 (CPPPLVHYDCYRKRCEETCAPYPNAARACPAQEGQCSPGCYCPDGKLRKGDQCVLPADC) enclose the TIL 5 domain. Residues 1951–2136 (CTCTGVGTPA…WQASPEKLTE (186 aa)) form the VWFD 3 domain. Disulfide bonds link Cys1953/Cys2099 and Cys2001/Cys2009. N-linked (GlcNAc...) asparagine glycosylation is found at Asn1975 and Asn1985. 5 N-linked (GlcNAc...) asparagine glycosylation sites follow: Asn2093, Asn2113, Asn2161, Asn2276, and Asn2451. One can recognise a TIL 6 domain in the interval 2229–2285 (CEEPFVYRACVDCERTCDNYEQLQTSPEKCTNKPVEGCFCPEGKVRVNNTCIEPGKC). The VWFC 1 domain occupies 2553–2622 (VACRHQDNVY…DSGQCCGKCE (70 aa)). N-linked (GlcNAc...) asparagine glycosylation is found at Asn2647, Asn2654, Asn2663, Asn2794, Asn2810, Asn2865, Asn2929, Asn2964, and Asn3028. A VWFC 2 domain is found at 2842–2907 (VACRDGDKIY…AADHCCGRCV (66 aa)). 4 cysteine pairs are disulfide-bonded: Cys2971–Cys3040, Cys2991–Cys3054, Cys3004–Cys3070, and Cys3020–Cys3072. The CTCK domain occupies 2971–3076 (CNEKPQALSK…PARCHCAACG (106 aa)).

May be converted into the 260 kDa mature hemocytin by proteolysis.

Its function is as follows. Adhesive protein and relates to hemostasis or encapsulation of foreign substances for self-defense. This chain is Hemocytin, found in Bombyx mori (Silk moth).